A 320-amino-acid polypeptide reads, in one-letter code: Thymidine kinase (320 aa).

ATP is bound at residue 10 to 17 (GAYDTGKS). Glu33 (proton acceptor) is an active-site residue. Substrate-binding residues include Tyr51 and Gln75. Arg162 is an ATP binding site. Arg168 serves as a coordination point for substrate.

Belongs to the herpesviridae thymidine kinase family. Homodimer.

The catalysed reaction is thymidine + ATP = dTMP + ADP + H(+). Catalyzes the transfer of the gamma-phospho group of ATP to thymidine to generate dTMP in the salvage pathway of pyrimidine synthesis. The dTMP serves as a substrate for DNA polymerase during viral DNA replication. Allows the virus to be reactivated and to grow in non-proliferative cells lacking a high concentration of phosphorylated nucleic acid precursors. This Suid herpesvirus 1 (strain NIA-3) (SuHV-1) protein is Thymidine kinase.